The chain runs to 490 residues: Cardiolipin synthase A (490 aa).

Helical transmembrane passes span Leu20–Leu40 and Ile49–Phe69. PLD phosphodiesterase domains follow at residues Val229–Tyr256 and Gln403–Ser430. Active-site residues include His234, Lys236, Asp241, His408, Lys410, and Asp415.

This sequence belongs to the phospholipase D family. Cardiolipin synthase subfamily. ClsA sub-subfamily.

It is found in the cell inner membrane. The catalysed reaction is 2 a 1,2-diacyl-sn-glycero-3-phospho-(1'-sn-glycerol) = a cardiolipin + glycerol. Catalyzes the reversible phosphatidyl group transfer from one phosphatidylglycerol molecule to another to form cardiolipin (CL) (diphosphatidylglycerol) and glycerol. In Pseudomonas aeruginosa (strain LESB58), this protein is Cardiolipin synthase A.